A 106-amino-acid chain; its full sequence is uncharacterized protein (106 aa).

Disordered stretches follow at residues 27–47 and 83–106; these read FSDS…DVSD and SPAM…VQSK. Positions 29–39 are enriched in acidic residues; it reads DSEDEPDDEAS. Residues 94–106 show a composition bias toward basic and acidic residues; sequence GIEREDRGGVQSK.

Its subcellular location is the mitochondrion. This is an uncharacterized protein from Arabidopsis thaliana (Mouse-ear cress).